A 345-amino-acid chain; its full sequence is Ferritin-like-encapsulin shell fusion protein (345 aa).

The ferritin-like domain stretch occupies residues 1–109; it reads MLSINPTLIN…INDNKKEESN (109 aa). Glutamate 31, glutamate 61, and histidine 64 together coordinate Fe cation. Residues 110–345 are encapsulin domain; that stretch reads VEYFEKLRSA…KNPEAIVVLE (236 aa).

It in the N-terminal section; belongs to the ferritin-like superfamily. This sequence in the C-terminal section; belongs to the encapsulin family. Family 1 subfamily. As to quaternary structure, 180 monomers assemble into 12 pentamers and 20 hexamers which further assemble into an icosahedral particle about 36.6 nm in diameter. The N-terminal domain (residues 1-99) crystallizes as 3 decamers.

Its subcellular location is the encapsulin nanocompartment. It carries out the reaction 4 Fe(2+) + O2 + 4 H(+) = 4 Fe(3+) + 2 H2O. With respect to regulation, the ferroxidase activity is inhibited by zinc. Functionally, fusion of the shell and cargo protein of a type 1 encapsulin nanocompartment. The nanocompartment is probably involved in iron storage. Expression in E.coli generates spherical particles (PfSPs) about 30 nm in diameter. The purified N-terminus has ferroxidase activity. The polypeptide is Ferritin-like-encapsulin shell fusion protein (Pyrococcus furiosus (strain ATCC 43587 / DSM 3638 / JCM 8422 / Vc1)).